The sequence spans 122 residues: Large ribosomal subunit protein uL14 (122 aa).

This sequence belongs to the universal ribosomal protein uL14 family. In terms of assembly, part of the 50S ribosomal subunit. Forms a cluster with proteins L3 and L19. In the 70S ribosome, L14 and L19 interact and together make contacts with the 16S rRNA in bridges B5 and B8.

Its function is as follows. Binds to 23S rRNA. Forms part of two intersubunit bridges in the 70S ribosome. This Variovorax paradoxus (strain S110) protein is Large ribosomal subunit protein uL14.